The primary structure comprises 440 residues: Chromosome partition protein MukF (440 aa).

Residues 208-236 are leucine-zipper; that stretch reads LSETSGTLRELQDTLDAAGDKLQANLLRI.

It belongs to the MukF family. As to quaternary structure, interacts, and probably forms a ternary complex, with MukE and MukB via its C-terminal region. The complex formation is stimulated by calcium or magnesium. It is required for an interaction between MukE and MukB.

It localises to the cytoplasm. The protein localises to the nucleoid. In terms of biological role, involved in chromosome condensation, segregation and cell cycle progression. May participate in facilitating chromosome segregation by condensation DNA from both sides of a centrally located replisome during cell division. Not required for mini-F plasmid partitioning. Probably acts via its interaction with MukB and MukE. Overexpression results in anucleate cells. It has a calcium binding activity. The protein is Chromosome partition protein MukF of Klebsiella pneumoniae subsp. pneumoniae (strain ATCC 700721 / MGH 78578).